The chain runs to 813 residues: Protein tramtrack, alpha isoform (813 aa).

The BTB domain occupies 33 to 98 (TDVTLAVEGQ…MYRGEVSVDQ (66 aa)). Disordered regions lie at residues 118–148 (EVNDDKPSPAAAAAGAGATGSESTATTPQLQ), 171–324 (ANAG…GPSE), 356–428 (TTPA…MPKK), and 526–585 (AGLP…LDDQ). Positions 125–145 (SPAAAAAGAGATGSESTATTP) are enriched in low complexity. The span at 176 to 187 (TPTLPVQPSLLS) shows a compositional bias: polar residues. Residues 192 to 201 (PKRKRGRPRK) are compositionally biased toward basic residues. Residues S203, S205, and S206 each carry the phosphoserine modification. T209 bears the Phosphothreonine mark. The span at 254–285 (HTDDLNESRDSLPSKRSKNSKDHRVVSHHEDN) shows a compositional bias: basic and acidic residues. 3 stretches are compositionally biased toward polar residues: residues 302-324 (LFGSSSTTISATAPGGSSTGPSE), 356-369 (TTPAQQGSPQTPTK), and 377-388 (ATGSNNSNSLLK). The segment covering 560–578 (SGKKGAKRPIQRRRVRRKA) has biased composition (basic residues). 2 consecutive C2H2-type zinc fingers follow at residues 610-638 (YRCTECAKENMQKTFKNKYSFQRHAFLYH) and 646-669 (FPCPVCSKEFSRPDKMKNHLKMTH). The residue at position 682 (S682) is a Phosphoserine.

Interacts with CoRest/CG33525, suggesting that it acts by recruiting a CoRest-containing corepressor complex. Interacts with phyl.

It is found in the nucleus. Binds to a number of sites in the transcriptional regulatory region of ftz. Isoform alpha is required to repress genes that promote the R7 cell fate. Probable repressor of the transcription of the segmentation genes ftz, eve, h, odd, run, and en. May bind to the region 5'-AGGG[CT]GG-3'. Degradation of ttk is directed by binding of sinah or sina, via the adapter molecule phyl which binds to the BTB domain of ttk. In Drosophila melanogaster (Fruit fly), this protein is Protein tramtrack, alpha isoform (ttk).